Reading from the N-terminus, the 277-residue chain is Diaminopimelate epimerase (277 aa).

Substrate-binding residues include Asn-15, Gln-48, and Asn-66. Catalysis depends on Cys-75, which acts as the Proton donor. Residues 76–77, Asn-156, Asn-189, and 207–208 contribute to the substrate site; these read GN and ER. The active-site Proton acceptor is Cys-216. Residue 217–218 coordinates substrate; it reads GS.

The protein belongs to the diaminopimelate epimerase family. In terms of assembly, homodimer.

The protein localises to the cytoplasm. The catalysed reaction is (2S,6S)-2,6-diaminopimelate = meso-2,6-diaminopimelate. The protein operates within amino-acid biosynthesis; L-lysine biosynthesis via DAP pathway; DL-2,6-diaminopimelate from LL-2,6-diaminopimelate: step 1/1. Catalyzes the stereoinversion of LL-2,6-diaminopimelate (L,L-DAP) to meso-diaminopimelate (meso-DAP), a precursor of L-lysine and an essential component of the bacterial peptidoglycan. The chain is Diaminopimelate epimerase from Acidiphilium cryptum (strain JF-5).